The sequence spans 379 residues: Chaperone protein DnaJ (379 aa).

Residues 5–69 enclose the J domain; the sequence is EYYERLGVDK…QKRAAYDQYG (65 aa). The CR-type zinc finger occupies 141–223; the sequence is GVEKQVKYNR…CHGSGHEKVA (83 aa). Residues C154, C157, C171, C174, C197, C200, and C214 each contribute to the Zn(2+) site. 4 CXXCXGXG motif repeats span residues 154–161, 171–178, 197–204, and 211–218; these read CHTCGGSG, CHKCGGRG, CDVCHGTG, and STTCHGSG.

Belongs to the DnaJ family. As to quaternary structure, homodimer. Requires Zn(2+) as cofactor.

The protein localises to the cytoplasm. Its function is as follows. Participates actively in the response to hyperosmotic and heat shock by preventing the aggregation of stress-denatured proteins and by disaggregating proteins, also in an autonomous, DnaK-independent fashion. Unfolded proteins bind initially to DnaJ; upon interaction with the DnaJ-bound protein, DnaK hydrolyzes its bound ATP, resulting in the formation of a stable complex. GrpE releases ADP from DnaK; ATP binding to DnaK triggers the release of the substrate protein, thus completing the reaction cycle. Several rounds of ATP-dependent interactions between DnaJ, DnaK and GrpE are required for fully efficient folding. Also involved, together with DnaK and GrpE, in the DNA replication of plasmids through activation of initiation proteins. This is Chaperone protein DnaJ from Lactococcus lactis subsp. cremoris (Streptococcus cremoris).